A 190-amino-acid chain; its full sequence is Potassium-transporting ATPase KdpC subunit (190 aa).

The chain crosses the membrane as a helical span at residues 9–29 (VMFILFTIICGGIYPSVVTGI).

Belongs to the KdpC family. The system is composed of three essential subunits: KdpA, KdpB and KdpC.

It is found in the cell inner membrane. Functionally, part of the high-affinity ATP-driven potassium transport (or Kdp) system, which catalyzes the hydrolysis of ATP coupled with the electrogenic transport of potassium into the cytoplasm. This subunit acts as a catalytic chaperone that increases the ATP-binding affinity of the ATP-hydrolyzing subunit KdpB by the formation of a transient KdpB/KdpC/ATP ternary complex. In Citrifermentans bemidjiense (strain ATCC BAA-1014 / DSM 16622 / JCM 12645 / Bem) (Geobacter bemidjiensis), this protein is Potassium-transporting ATPase KdpC subunit.